Consider the following 85-residue polypeptide: MQAARFVVSGVVQGVYYRACTRQRAVALGLVGHARNQADGSVDVVAAGSAAALDALEAWLCRARRPPRSRRSRARPARFRRLKTL.

One can recognise an Acylphosphatase-like domain in the interval 3-85 (AARFVVSGVV…PARFRRLKTL (83 aa)). Residues Arg18 and Asn36 contribute to the active site. Positions 66–85 (PPRSRRSRARPARFRRLKTL) are disordered.

This sequence belongs to the acylphosphatase family.

The enzyme catalyses an acyl phosphate + H2O = a carboxylate + phosphate + H(+). The chain is Acylphosphatase (acyP) from Xanthomonas axonopodis pv. citri (strain 306).